The following is a 591-amino-acid chain: Indole-3-acetic acid-amido synthetase GH3.10 (591 aa).

This sequence belongs to the IAA-amido conjugating enzyme family. As to expression, expressed in cotyledons and hypocotyls.

In terms of biological role, catalyzes the synthesis of indole-3-acetic acid (IAA)-amino acid conjugates, providing a mechanism for the plant to cope with the presence of excess auxin. Involved in red light-specific hypocotyl elongation. May act downstream of a red light signal transduction and determine the degree of hypocotyl elongation. The chain is Indole-3-acetic acid-amido synthetase GH3.10 from Arabidopsis thaliana (Mouse-ear cress).